Reading from the N-terminus, the 448-residue chain is Phosphoglucosamine mutase (448 aa).

Catalysis depends on serine 100, which acts as the Phosphoserine intermediate. Residues serine 100, aspartate 240, aspartate 242, and aspartate 244 each contribute to the Mg(2+) site. Phosphoserine is present on serine 100.

The protein belongs to the phosphohexose mutase family. As to quaternary structure, homodimer, may form a complex with CdaA. It depends on Mg(2+) as a cofactor. Activated by phosphorylation.

It carries out the reaction alpha-D-glucosamine 1-phosphate = D-glucosamine 6-phosphate. In terms of biological role, catalyzes the conversion of glucosamine-6-phosphate to glucosamine-1-phosphate. Glucosamine-1-phosphate is used for cell wall biosynthesis. This Bacillus subtilis (strain 168) protein is Phosphoglucosamine mutase.